The primary structure comprises 231 residues: Small ribosomal subunit protein uS3 (231 aa).

Residues 39-107 form the KH type-2 domain; sequence IRELLHKELK…DVVLNIVEIR (69 aa).

This sequence belongs to the universal ribosomal protein uS3 family. Part of the 30S ribosomal subunit. Forms a tight complex with proteins S10 and S14.

Functionally, binds the lower part of the 30S subunit head. Binds mRNA in the 70S ribosome, positioning it for translation. This is Small ribosomal subunit protein uS3 from Nitrobacter winogradskyi (strain ATCC 25391 / DSM 10237 / CIP 104748 / NCIMB 11846 / Nb-255).